The primary structure comprises 211 residues: ATP phosphoribosyltransferase (211 aa).

The protein belongs to the ATP phosphoribosyltransferase family. Short subfamily. Heteromultimer composed of HisG and HisZ subunits.

Its subcellular location is the cytoplasm. The enzyme catalyses 1-(5-phospho-beta-D-ribosyl)-ATP + diphosphate = 5-phospho-alpha-D-ribose 1-diphosphate + ATP. Its pathway is amino-acid biosynthesis; L-histidine biosynthesis; L-histidine from 5-phospho-alpha-D-ribose 1-diphosphate: step 1/9. Its function is as follows. Catalyzes the condensation of ATP and 5-phosphoribose 1-diphosphate to form N'-(5'-phosphoribosyl)-ATP (PR-ATP). Has a crucial role in the pathway because the rate of histidine biosynthesis seems to be controlled primarily by regulation of HisG enzymatic activity. The protein is ATP phosphoribosyltransferase of Pseudomonas syringae pv. syringae (strain B728a).